Consider the following 305-residue polypeptide: Protoheme IX farnesyltransferase (305 aa).

9 helical membrane-spanning segments follow: residues 31–51 (VMSL…YSVH), 52–72 (PFIA…AGAI), 96–118 (VIES…FFMA), 122–144 (NLLA…TIWL), 151–171 (NIVI…AAVS), 180–200 (ILFL…ALFC), 225–245 (ILIY…IGMN), 247–267 (FIYL…AGSL), and 281–301 (FAYS…TNTI).

The protein belongs to the UbiA prenyltransferase family. Protoheme IX farnesyltransferase subfamily.

It is found in the cell inner membrane. The enzyme catalyses heme b + (2E,6E)-farnesyl diphosphate + H2O = Fe(II)-heme o + diphosphate. Its pathway is porphyrin-containing compound metabolism; heme O biosynthesis; heme O from protoheme: step 1/1. In terms of biological role, converts heme B (protoheme IX) to heme O by substitution of the vinyl group on carbon 2 of heme B porphyrin ring with a hydroxyethyl farnesyl side group. The polypeptide is Protoheme IX farnesyltransferase (Rickettsia peacockii (strain Rustic)).